A 688-amino-acid polypeptide reads, in one-letter code: Glycine--tRNA ligase beta subunit (688 aa).

This sequence belongs to the class-II aminoacyl-tRNA synthetase family. As to quaternary structure, tetramer of two alpha and two beta subunits.

The protein localises to the cytoplasm. The enzyme catalyses tRNA(Gly) + glycine + ATP = glycyl-tRNA(Gly) + AMP + diphosphate. In Desulforudis audaxviator (strain MP104C), this protein is Glycine--tRNA ligase beta subunit.